The chain runs to 335 residues: Large ribosomal subunit protein uL3 (335 aa).

The segment at 1 to 20 (MATIHRPRRGSLAFSPRKRA) is disordered.

Belongs to the universal ribosomal protein uL3 family. As to quaternary structure, part of the 50S ribosomal subunit. Forms a cluster with proteins L14 and L24e.

Functionally, one of the primary rRNA binding proteins, it binds directly near the 3'-end of the 23S rRNA, where it nucleates assembly of the 50S subunit. The polypeptide is Large ribosomal subunit protein uL3 (Methanothrix thermoacetophila (strain DSM 6194 / JCM 14653 / NBRC 101360 / PT) (Methanosaeta thermophila)).